The primary structure comprises 254 residues: 3-dehydroquinate dehydratase (254 aa).

3-dehydroquinate is bound by residues 47-49 (EFR) and Arg-83. His-144 serves as the catalytic Proton donor/acceptor. The active-site Schiff-base intermediate with substrate is Lys-171. Residues Arg-213, Ser-232, and Gln-236 each contribute to the 3-dehydroquinate site.

Belongs to the type-I 3-dehydroquinase family. In terms of assembly, homodimer.

The enzyme catalyses 3-dehydroquinate = 3-dehydroshikimate + H2O. It functions in the pathway metabolic intermediate biosynthesis; chorismate biosynthesis; chorismate from D-erythrose 4-phosphate and phosphoenolpyruvate: step 3/7. Involved in the third step of the chorismate pathway, which leads to the biosynthesis of aromatic amino acids. Catalyzes the cis-dehydration of 3-dehydroquinate (DHQ) and introduces the first double bond of the aromatic ring to yield 3-dehydroshikimate. The chain is 3-dehydroquinate dehydratase from Neisseria meningitidis serogroup C / serotype 2a (strain ATCC 700532 / DSM 15464 / FAM18).